The following is a 134-amino-acid chain: Probable glycine cleavage system H protein (134 aa).

Positions threonine 29–lysine 110 constitute a Lipoyl-binding domain. An N6-lipoyllysine modification is found at lysine 70.

The protein belongs to the GcvH family. In terms of assembly, the glycine cleavage system is composed of four proteins: P, T, L and H. Requires (R)-lipoate as cofactor.

Functionally, the glycine cleavage system catalyzes the degradation of glycine. The H protein shuttles the methylamine group of glycine from the P protein to the T protein. This is Probable glycine cleavage system H protein from Pyrococcus horikoshii (strain ATCC 700860 / DSM 12428 / JCM 9974 / NBRC 100139 / OT-3).